The primary structure comprises 402 residues: Queuine tRNA-ribosyltransferase-like protein (402 aa).

Belongs to the queuine tRNA-ribosyltransferase family.

This Theileria annulata protein is Queuine tRNA-ribosyltransferase-like protein.